Here is a 420-residue protein sequence, read N- to C-terminus: UDP-N-acetylglucosamine 1-carboxyvinyltransferase (420 aa).

Phosphoenolpyruvate is bound at residue 22-23 (KN). Arg92 serves as a coordination point for UDP-N-acetyl-alpha-D-glucosamine. Cys116 acts as the Proton donor in catalysis. Cys116 bears the 2-(S-cysteinyl)pyruvic acid O-phosphothioketal mark. Residues Asp306 and Ile328 each contribute to the UDP-N-acetyl-alpha-D-glucosamine site.

This sequence belongs to the EPSP synthase family. MurA subfamily.

The protein resides in the cytoplasm. The catalysed reaction is phosphoenolpyruvate + UDP-N-acetyl-alpha-D-glucosamine = UDP-N-acetyl-3-O-(1-carboxyvinyl)-alpha-D-glucosamine + phosphate. It functions in the pathway cell wall biogenesis; peptidoglycan biosynthesis. Cell wall formation. Adds enolpyruvyl to UDP-N-acetylglucosamine. The sequence is that of UDP-N-acetylglucosamine 1-carboxyvinyltransferase from Blochmanniella floridana.